The following is a 342-amino-acid chain: Glycerol-1-phosphate dehydrogenase [NAD(P)+] (342 aa).

NAD(+)-binding positions include 84–88 and 106–109; these read GRPID and TSAS. Position 111 (D111) interacts with substrate. Position 115 (S115) interacts with NAD(+). Residue D160 coordinates substrate. Positions 160 and 241 each coordinate Zn(2+). Residue H245 participates in substrate binding. A Zn(2+)-binding site is contributed by H260.

The protein belongs to the glycerol-1-phosphate dehydrogenase family. Homodimer. Zn(2+) is required as a cofactor.

It is found in the cytoplasm. It carries out the reaction sn-glycerol 1-phosphate + NAD(+) = dihydroxyacetone phosphate + NADH + H(+). It catalyses the reaction sn-glycerol 1-phosphate + NADP(+) = dihydroxyacetone phosphate + NADPH + H(+). The protein operates within membrane lipid metabolism; glycerophospholipid metabolism. In terms of biological role, catalyzes the NAD(P)H-dependent reduction of dihydroxyacetonephosphate (DHAP or glycerone phosphate) to glycerol 1-phosphate (G1P). The G1P thus generated is used as the glycerophosphate backbone of phospholipids in the cellular membranes of Archaea. This Pyrobaculum arsenaticum (strain DSM 13514 / JCM 11321 / PZ6) protein is Glycerol-1-phosphate dehydrogenase [NAD(P)+].